Here is a 254-residue protein sequence, read N- to C-terminus: Short-chain dehydrogenase/reductase SDRA (254 aa).

15-39 (IVTASTQGIGFGITERFGLEGASVV) provides a ligand contact to NADP(+). Ser-146 is a binding site for substrate. Catalysis depends on Tyr-159, which acts as the Proton acceptor. The Microbody targeting signal motif lies at 252–254 (SRL).

The protein belongs to the short-chain dehydrogenases/reductases (SDR) family.

It is found in the peroxisome. Functionally, involved with IBR3 and IBR10 in the peroxisomal beta-oxidation of indole-3-butyric acid (IBA) to form indole-3-acetic acid (IAA), a biologically active auxin. May be responsible for catalyzing the dehydrogenation step in the conversion of IBA. May be involved in the peroxisomal activation of 2,4-dichlorophenoxybutyric acid (2,4-DB), a precursor of active auxins that inhibit root growth. This is Short-chain dehydrogenase/reductase SDRA from Arabidopsis thaliana (Mouse-ear cress).